The following is a 519-amino-acid chain: 3-octaprenyl-4-hydroxybenzoate carboxy-lyase (519 aa).

Position 177 (Asn177) interacts with Mn(2+). Residues 180–182, 194–196, and 199–200 each bind prenylated FMN; these read IYR, RWL, and RG. Residue Glu243 participates in Mn(2+) binding. The Proton donor role is filled by Asp318.

The protein belongs to the UbiD family. Homohexamer. Prenylated FMN serves as cofactor. Requires Mn(2+) as cofactor.

The protein localises to the cell membrane. The enzyme catalyses a 4-hydroxy-3-(all-trans-polyprenyl)benzoate + H(+) = a 2-(all-trans-polyprenyl)phenol + CO2. Its pathway is cofactor biosynthesis; ubiquinone biosynthesis. Catalyzes the decarboxylation of 3-octaprenyl-4-hydroxy benzoate to 2-octaprenylphenol, an intermediate step in ubiquinone biosynthesis. The sequence is that of 3-octaprenyl-4-hydroxybenzoate carboxy-lyase from Burkholderia pseudomallei (strain 1710b).